We begin with the raw amino-acid sequence, 452 residues long: Probable dihydrolipoyllysine-residue succinyltransferase component of 2-oxoglutarate dehydrogenase complex, mitochondrial (452 aa).

The region spanning 42–117 is the Lipoyl-binding domain; that stretch reads STRIKTPPFP…TIDQDIAVID (76 aa). K83 is modified (N6-lipoyllysine). The disordered stretch occupies residues 119-225; the sequence is SAAPPEGGSA…FSRNEDRVKM (107 aa). 3 stretches are compositionally biased toward basic and acidic residues: residues 130 to 144, 154 to 170, and 195 to 209; these read PKKD…DAAK, KPIE…EQKE, and AKSE…KATE. Catalysis depends on residues H424 and D428.

The protein belongs to the 2-oxoacid dehydrogenase family. (R)-lipoate serves as cofactor.

Its subcellular location is the mitochondrion. The enzyme catalyses N(6)-[(R)-dihydrolipoyl]-L-lysyl-[protein] + succinyl-CoA = N(6)-[(R)-S(8)-succinyldihydrolipoyl]-L-lysyl-[protein] + CoA. It participates in amino-acid degradation; L-lysine degradation via saccharopine pathway; glutaryl-CoA from L-lysine: step 6/6. Functionally, the 2-oxoglutarate dehydrogenase complex catalyzes the overall conversion of 2-oxoglutarate to succinyl-CoA and CO(2). It contains multiple copies of three enzymatic components: 2-oxoglutarate dehydrogenase (E1), dihydrolipoamide succinyltransferase (E2) and lipoamide dehydrogenase (E3). This chain is Probable dihydrolipoyllysine-residue succinyltransferase component of 2-oxoglutarate dehydrogenase complex, mitochondrial (kgd2), found in Schizosaccharomyces pombe (strain 972 / ATCC 24843) (Fission yeast).